We begin with the raw amino-acid sequence, 639 residues long: mRNA export factor (639 aa).

Disordered stretches follow at residues 1–45 (MQAE…SLES), 63–287 (LLGD…KWGA), and 322–355 (CTARDPARAHDSGAECPPTEKRDERRTCAPSQPR). Over residues 142-152 (PRRRTHARSRS) the composition is skewed to basic residues. A compositionally biased stretch (low complexity) spans 153–169 (PRAGSTSSQQPPSSSGG). Residues 175–189 (VRREAGDRETSEKPA) show a composition bias toward basic and acidic residues. Residues 203–215 (HQCQSPPAQTASQ) show a composition bias toward polar residues. Basic and acidic residues-rich tracts occupy residues 234-247 (RTPHDHQERRHEGA) and 326-348 (DPARAHDSGAECPPTEKRDERRT). Zn(2+) contacts are provided by Cys-525, His-606, Cys-610, and Cys-615. A CHC2-type zinc finger spans residues 525 to 615 (CHLAASKSPL…HANVCRKEEC (91 aa)).

This sequence belongs to the HHV-1 ICP27 protein family.

Its subcellular location is the host cytoplasm. It localises to the host nucleus. Multifunctional regulator of the expression of viral genes that mediates nuclear export of viral intronless mRNAs. This immediate early (EI) protein promotes the nuclear export of viral intronless mRNAs. The polypeptide is mRNA export factor (Amazona oratrix (yellow-headed parrot)).